Reading from the N-terminus, the 535-residue chain is Glutamate--cysteine ligase (535 aa).

Belongs to the glutamate--cysteine ligase type 1 family. Type 1 subfamily.

The enzyme catalyses L-cysteine + L-glutamate + ATP = gamma-L-glutamyl-L-cysteine + ADP + phosphate + H(+). The protein operates within sulfur metabolism; glutathione biosynthesis; glutathione from L-cysteine and L-glutamate: step 1/2. This chain is Glutamate--cysteine ligase, found in Pseudomonas savastanoi pv. phaseolicola (strain 1448A / Race 6) (Pseudomonas syringae pv. phaseolicola (strain 1448A / Race 6)).